A 329-amino-acid chain; its full sequence is Peroxidase 51 (329 aa).

Residues 1–25 (MVVMNKTNLLLLILSLFLAINLSSA) form the signal peptide. 4 disulfides stabilise this stretch: C36-C119, C69-C74, C125-C325, and C204-C236. Catalysis depends on H67, which acts as the Proton acceptor. Ca(2+)-binding residues include D68, V71, G73, D75, and S77. Position 167 (P167) interacts with substrate. H197 contacts heme b. Position 198 (T198) interacts with Ca(2+). N215 is a glycosylation site (N-linked (GlcNAc...) asparagine). Residues D249, T252, and D257 each contribute to the Ca(2+) site.

This sequence belongs to the peroxidase family. Classical plant (class III) peroxidase subfamily. The cofactor is heme b. Ca(2+) serves as cofactor.

Its subcellular location is the secreted. It carries out the reaction 2 a phenolic donor + H2O2 = 2 a phenolic radical donor + 2 H2O. Removal of H(2)O(2), oxidation of toxic reductants, biosynthesis and degradation of lignin, suberization, auxin catabolism, response to environmental stresses such as wounding, pathogen attack and oxidative stress. These functions might be dependent on each isozyme/isoform in each plant tissue. This chain is Peroxidase 51 (PER51), found in Arabidopsis thaliana (Mouse-ear cress).